A 708-amino-acid polypeptide reads, in one-letter code: Leukotoxin translocation ATP-binding protein LktB (708 aa).

In terms of domain architecture, Peptidase C39 spans 1–126 (MEVNHQSNDL…SCYQGKIILV (126 aa)). In terms of domain architecture, ABC transmembrane type-1 spans 155 to 437 (FLETLLVSIF…LAQLWQDFTQ (283 aa)). 5 helical membrane passes run 159–179 (LLVS…FQVV), 192–212 (LNII…LSGL), 270–290 (ALTS…MWYY), 296–316 (LVIL…SPIL), and 389–409 (VMVI…LSIG). The region spanning 469–704 (IAFKNIRFRY…NNGLYSYLHQ (236 aa)) is the ABC transporter domain. ATP is bound at residue 503-510 (GRSGSGKS).

This sequence belongs to the ABC transporter superfamily. Protein-1 exporter (TC 3.A.1.109) family. In terms of assembly, homodimer.

Its subcellular location is the cell inner membrane. The catalysed reaction is ATP + H2O + proteinSide 1 = ADP + phosphate + proteinSide 2.. In terms of biological role, part of the ABC transporter complex LktBD involved in leukotoxin export. Transmembrane domains (TMD) form a pore in the inner membrane and the ATP-binding domain (NBD) is responsible for energy generation. The protein is Leukotoxin translocation ATP-binding protein LktB (lktB) of Pasteurella haemolytica-like sp. (strain 5943B).